A 519-amino-acid chain; its full sequence is tRNA-2-methylthio-N(6)-dimethylallyladenosine synthase (519 aa).

The segment at 1–23 is disordered; it reads MNEQQRKQQSQIRTEQANVDRIK. The span at 7 to 17 shows a compositional bias: polar residues; sequence KQQSQIRTEQA. Residues 76–194 form the MTTase N-terminal domain; it reads KKFLIRTYGC…LPHLVKEALF (119 aa). The [4Fe-4S] cluster site is built by C85, C121, C155, C231, C235, and C238. Residues 217 to 450 form the Radical SAM core domain; it reads RKGKIKAWVN…VNKQSAASMK (234 aa). The region spanning 450–513 is the TRAM domain; the sequence is KDYAGKKVKV…TWSLNGVMVE (64 aa).

This sequence belongs to the methylthiotransferase family. MiaB subfamily. Monomer. [4Fe-4S] cluster is required as a cofactor.

Its subcellular location is the cytoplasm. It catalyses the reaction N(6)-dimethylallyladenosine(37) in tRNA + (sulfur carrier)-SH + AH2 + 2 S-adenosyl-L-methionine = 2-methylsulfanyl-N(6)-dimethylallyladenosine(37) in tRNA + (sulfur carrier)-H + 5'-deoxyadenosine + L-methionine + A + S-adenosyl-L-homocysteine + 2 H(+). In terms of biological role, catalyzes the methylthiolation of N6-(dimethylallyl)adenosine (i(6)A), leading to the formation of 2-methylthio-N6-(dimethylallyl)adenosine (ms(2)i(6)A) at position 37 in tRNAs that read codons beginning with uridine. This chain is tRNA-2-methylthio-N(6)-dimethylallyladenosine synthase, found in Oceanobacillus iheyensis (strain DSM 14371 / CIP 107618 / JCM 11309 / KCTC 3954 / HTE831).